Reading from the N-terminus, the 178-residue chain is Ras-like protein (178 aa).

1 to 6 (GGVGKS) lines the GTP pocket. The Effector region signature appears at 21–29 (YDPTIEDSY). Residues 46-50 (DTAGQ) and 105-108 (NKCD) contribute to the GTP site. Cysteine 175 bears the Cysteine methyl ester mark. A lipid anchor (S-geranylgeranyl cysteine) is attached at cysteine 175. Residues 176-178 (SIL) constitute a propeptide, removed in mature form.

It belongs to the small GTPase superfamily. Ras family.

It is found in the cell membrane. The enzyme catalyses GTP + H2O = GDP + phosphate + H(+). Its activity is regulated as follows. Alternates between an inactive form bound to GDP and an active form bound to GTP. Activated by a guanine nucleotide-exchange factor (GEF) and inactivated by a GTPase-activating protein (GAP). Functionally, ras proteins bind GDP/GTP and possess intrinsic GTPase activity. The polypeptide is Ras-like protein (Artemia salina (Brine shrimp)).